A 245-amino-acid polypeptide reads, in one-letter code: Ribonuclease PH (245 aa).

Residues arginine 87 and glycine 125–arginine 127 contribute to the phosphate site.

The protein belongs to the RNase PH family. In terms of assembly, homohexameric ring arranged as a trimer of dimers.

It catalyses the reaction tRNA(n+1) + phosphate = tRNA(n) + a ribonucleoside 5'-diphosphate. Functionally, phosphorolytic 3'-5' exoribonuclease that plays an important role in tRNA 3'-end maturation. Removes nucleotide residues following the 3'-CCA terminus of tRNAs; can also add nucleotides to the ends of RNA molecules by using nucleoside diphosphates as substrates, but this may not be physiologically important. Probably plays a role in initiation of 16S rRNA degradation (leading to ribosome degradation) during starvation. The protein is Ribonuclease PH of Streptomyces griseus subsp. griseus (strain JCM 4626 / CBS 651.72 / NBRC 13350 / KCC S-0626 / ISP 5235).